The chain runs to 280 residues: Putative pyruvate, phosphate dikinase regulatory protein (280 aa).

An ADP-binding site is contributed by 152 to 159; sequence GVSRTSKS.

Belongs to the pyruvate, phosphate/water dikinase regulatory protein family. PDRP subfamily.

It catalyses the reaction N(tele)-phospho-L-histidyl/L-threonyl-[pyruvate, phosphate dikinase] + ADP = N(tele)-phospho-L-histidyl/O-phospho-L-threonyl-[pyruvate, phosphate dikinase] + AMP + H(+). The enzyme catalyses N(tele)-phospho-L-histidyl/O-phospho-L-threonyl-[pyruvate, phosphate dikinase] + phosphate + H(+) = N(tele)-phospho-L-histidyl/L-threonyl-[pyruvate, phosphate dikinase] + diphosphate. Its function is as follows. Bifunctional serine/threonine kinase and phosphorylase involved in the regulation of the pyruvate, phosphate dikinase (PPDK) by catalyzing its phosphorylation/dephosphorylation. The polypeptide is Putative pyruvate, phosphate dikinase regulatory protein (Anaplasma phagocytophilum (strain HZ)).